We begin with the raw amino-acid sequence, 617 residues long: Pyrophosphate--fructose 6-phosphate 1-phosphotransferase subunit alpha 2 (617 aa).

The protein belongs to the phosphofructokinase type A (PFKA) family. PPi-dependent PFK group II subfamily. Clade 'Long' sub-subfamily. As to quaternary structure, tetramer of two alpha (regulatory) and two beta (catalytic) chains. Expressed in roots and specific parts such as the trichomes of leaves, cotyledon veins, as well as in stamen and gynoecium of flowers.

Its subcellular location is the cytoplasm. Its pathway is carbohydrate degradation; glycolysis; D-glyceraldehyde 3-phosphate and glycerone phosphate from D-glucose: step 3/4. Allosterically activated by fructose 2,6-bisphosphate. In terms of biological role, regulatory subunit of pyrophosphate--fructose 6-phosphate 1-phosphotransferase. The polypeptide is Pyrophosphate--fructose 6-phosphate 1-phosphotransferase subunit alpha 2 (Arabidopsis thaliana (Mouse-ear cress)).